A 123-amino-acid chain; its full sequence is Small ribosomal subunit protein uS12 (123 aa).

Residues 1–32 (MPTIQQLVRKGRKDKKAKVKTAALKGSPQRRG) form a disordered region. A compositionally biased stretch (basic residues) spans 9 to 19 (RKGRKDKKAKV). Asp-89 is modified (3-methylthioaspartic acid).

Belongs to the universal ribosomal protein uS12 family. As to quaternary structure, part of the 30S ribosomal subunit. Contacts proteins S8 and S17. May interact with IF1 in the 30S initiation complex.

Functionally, with S4 and S5 plays an important role in translational accuracy. Its function is as follows. Interacts with and stabilizes bases of the 16S rRNA that are involved in tRNA selection in the A site and with the mRNA backbone. Located at the interface of the 30S and 50S subunits, it traverses the body of the 30S subunit contacting proteins on the other side and probably holding the rRNA structure together. The combined cluster of proteins S8, S12 and S17 appears to hold together the shoulder and platform of the 30S subunit. The sequence is that of Small ribosomal subunit protein uS12 from Corynebacterium kroppenstedtii (strain DSM 44385 / JCM 11950 / CIP 105744 / CCUG 35717).